The following is a 397-amino-acid chain: MIEPLPTEDIPKQSVSIVGIASRCAPHKLGADELEAIARRHYSSTPSLEKMLEINRKTRIDHRYSVFSSDHEHWHRPTIPSFSECDSLFKEYGIPLASAASARAIQDWGGVPDEITHLVAVTCTNTAHPGFDSVLCRKLGLKCNVRRVLLHGIGCGGGISAMRVAHELLLGSTQQGVPARALIVACEVPTVFARSELDIMDKTQDVNVAMCLFGDCAAALVLSNGIGHKASEQRPIWNILNCEPTQFDGTEDIAHFNVHDKGYHAIIDKRIPQLTGKCVPAGFQSLISSTPSLALEEKNYVPSNYGWAVHPGGYAVLVAAQDALGLTADDLRASYDAYRDGGNTISTTIIRILEKLRDEHKHGSNQKDKLVLAAIGHGITLETAILTRPGSSSYLHA.

CoA contacts are provided by residues Lys50 and 50–57; that span reads KMLEINRK. The Nucleophile role is filled by Cys155. Position 214–215 (214–215) interacts with substrate; it reads GD. CoA-binding positions include Ile267, Gly312, 312–315, Tyr314, and Ala315; that span reads GGYA. Residue His377 is part of the active site.

This sequence belongs to the thiolase-like superfamily. Chalcone/stilbene synthases family. In terms of assembly, homodimer.

Functionally, acylalkylpyrone synthase that catalyzes not only the polyketide chain elongation but also the one-pot condensation of two beta-ketoacyl units to produce the 3-acyl-4-hydroxy-6-alkyl-alpha-pyrone (AcAP) scaffold, a precursor of csypyrone B. The enzyme reaction is initiated by the loading of acetoacetyl-CoA onto Cys-155, and subsequent thioester bond cleavage by the nucleophilic water generates the beta-keto acid intermediate, which is placed within a pocket. The second beta-ketoacyl unit is then produced by polyketide chain elongation of fatty acyl-CoA with one molecule of malonyl-CoA, and the condensation with the beta-ketoacid generates the final products. Csypyrone B1 is the major product and contains a propanoic acid side-chain, whereas csypyrones B2 and B3 are minor compounds that contain butyric or pentanoic acid side-chains, respectively. This is Acylalkylpyrone synthase csyB from Aspergillus oryzae (strain ATCC 42149 / RIB 40) (Yellow koji mold).